A 618-amino-acid polypeptide reads, in one-letter code: Glucose starvation modulator protein 1 (618 aa).

Residues 20–48 (CEFCHTKHIQCDVGRPCQNCLKRNIGKFC) constitute a DNA-binding region (zn(2)-C6 fungal-type). The segment at 325–352 (ANANTHPSHNAKLESECDSSSHSDADLE) is disordered. The span at 335 to 352 (AKLESECDSSSHSDADLE) shows a compositional bias: basic and acidic residues. One can recognise a PAS domain in the interval 466-538 (LLDLENMAKL…QIFNELLAFG (73 aa)).

It belongs to the ERT1/acuK family.

It localises to the nucleus. Its function is as follows. Transcription factor which regulates nonfermentable carbon utilization. Binds specifically to 5'-CGGN(8)CGG-3' and 5'-CGGN(9)CGG-3' sequences in the promoter region. The chain is Glucose starvation modulator protein 1 (GSM1) from Saccharomyces cerevisiae (strain YJM789) (Baker's yeast).